The sequence spans 471 residues: POU domain protein 2 (471 aa).

Acidic residues predominate over residues 1–18 (CGKSYEEEEEEEDDELEA). 2 disordered regions span residues 1-32 (CGKS…SARQ) and 149-238 (DQQL…PKPL). The span at 165-180 (STPLSKSPLRSPSLSP) shows a compositional bias: low complexity. Positions 186–196 (EPQQAQRTPPN) are enriched in polar residues. Residues 197-230 (SLAAAGLGLSSAVLTPNTPSMQQQQQQTMTSTTN) are compositionally biased toward low complexity. Residues 257-331 (EETTDLEELE…LLQKWLEDAD (75 aa)) enclose the POU-specific domain. The homeobox DNA-binding region spans 362-421 (RRKKRTSIETTIRGALEQAFVLNCKPTSEEINQLSERLHMDKEVVRVWFCNRRQKEKRIN).

This sequence belongs to the POU transcription factor family. Class-2 subfamily.

It is found in the nucleus. DNA-binding regulatory protein implicated in early development. Involved in neuronal cell fate decision. May act as an octamer-dependent activator of transcription. This Drosophila virilis (Fruit fly) protein is POU domain protein 2 (pdm2).